The following is a 556-amino-acid chain: DNA ligase B (556 aa).

The active-site N6-AMP-lysine intermediate is the Lys-122.

The protein belongs to the NAD-dependent DNA ligase family. LigB subfamily.

It carries out the reaction NAD(+) + (deoxyribonucleotide)n-3'-hydroxyl + 5'-phospho-(deoxyribonucleotide)m = (deoxyribonucleotide)n+m + AMP + beta-nicotinamide D-nucleotide.. In terms of biological role, catalyzes the formation of phosphodiester linkages between 5'-phosphoryl and 3'-hydroxyl groups in double-stranded DNA using NAD as a coenzyme and as the energy source for the reaction. The polypeptide is DNA ligase B (Enterobacter sp. (strain 638)).